Reading from the N-terminus, the 224-residue chain is 7-cyano-7-deazaguanine synthase (224 aa).

10 to 20 (LSGGLDSATVV) lines the ATP pocket. Positions 189, 199, 202, and 205 each coordinate Zn(2+).

This sequence belongs to the QueC family. Zn(2+) is required as a cofactor.

The enzyme catalyses 7-carboxy-7-deazaguanine + NH4(+) + ATP = 7-cyano-7-deazaguanine + ADP + phosphate + H2O + H(+). Its pathway is purine metabolism; 7-cyano-7-deazaguanine biosynthesis. Its function is as follows. Catalyzes the ATP-dependent conversion of 7-carboxy-7-deazaguanine (CDG) to 7-cyano-7-deazaguanine (preQ(0)). The sequence is that of 7-cyano-7-deazaguanine synthase from Pseudomonas fluorescens (strain SBW25).